A 402-amino-acid polypeptide reads, in one-letter code: Arabinosyltransferase RRA1 (402 aa).

The Cytoplasmic portion of the chain corresponds to 1–13 (MAVRKEKVQPFRE). Residues 14–34 (CGIAIAVLVGIFIGCVCTILI) form a helical; Signal-anchor for type II membrane protein membrane-spanning segment. At 35–402 (PNDFVNFRSS…DALDRFRDGS (368 aa)) the chain is on the lumenal side. The short motif at 225 to 227 (DVD) is the DXD motif element. Residue asparagine 253 is glycosylated (N-linked (GlcNAc...) asparagine).

This sequence belongs to the glycosyltransferase 77 family. In terms of tissue distribution, expressed in leaf meristem and at points of cauline leaf attachments on the primary stem. Expressed at low levels in siliques.

It localises to the golgi apparatus membrane. Plays a role in the arabinosylation of cell wall components. Involved in the arabinosylation of extensin proteins in root hair cells. Extensins are structural glycoproteins present in cell walls and its arabinosylation is important for root hair cell development. The sequence is that of Arabinosyltransferase RRA1 from Arabidopsis thaliana (Mouse-ear cress).